A 131-amino-acid polypeptide reads, in one-letter code: UPF0102 protein YraN (131 aa).

A compositionally biased stretch (polar residues) spans 1 to 19; that stretch reads MATVPTRSGSPRQLTTKQT. Positions 1-21 are disordered; sequence MATVPTRSGSPRQLTTKQTGD.

The protein belongs to the UPF0102 family.

The protein is UPF0102 protein YraN of Shigella flexneri serotype 5b (strain 8401).